Reading from the N-terminus, the 103-residue chain is MLNDLYEEIKLRKTQPREGSYTNYLFDKGLDKILKKVGEEATEVVIAAKNNEQELIAEVSDLTYHLLVLLAEQNIPLSKIQAELQNREGKLSTTRDRKEINDL.

Belongs to the PRA-PH family.

Its subcellular location is the cytoplasm. The catalysed reaction is 1-(5-phospho-beta-D-ribosyl)-ATP + H2O = 1-(5-phospho-beta-D-ribosyl)-5'-AMP + diphosphate + H(+). It participates in amino-acid biosynthesis; L-histidine biosynthesis; L-histidine from 5-phospho-alpha-D-ribose 1-diphosphate: step 2/9. The polypeptide is Phosphoribosyl-ATP pyrophosphatase (Listeria monocytogenes serotype 4b (strain CLIP80459)).